The sequence spans 546 residues: Phosphatidylinositol 4-phosphate 5-kinase type-1 alpha (546 aa).

The PIPK domain occupies 66 to 434 (TSSALKGAIQ…RFQRFMCNTV (369 aa)). Lys88 participates in a covalent cross-link: Glycyl lysine isopeptide (Lys-Gly) (interchain with G-Cter in ubiquitin). Disordered regions lie at residues 442-475 (PSPT…SGEH) and 491-518 (LGRP…PSFS). Low complexity-rich tracts occupy residues 450–462 (SGPS…GPSG) and 509–518 (GSPVPGPSFS).

As to quaternary structure, interacts with RAC1. Interacts with TUT1. Forms a complex with CDH1/E-cadherin, CTNNB1/beta-catenin and CTNND1 at the plasma membrane upon calcium stimulation. Found in a ternary complex with IRS1 and DGKZ in the absence of insulin stimulation. Interacts with DGKZ. Interacts with PIP4K2C; the interaction inhibits PIP5K1A kinase activity. Highest expression in brain. Also detected in skeletal muscle, testis, brain and lung.

It localises to the cell membrane. Its subcellular location is the cytoplasm. It is found in the nucleus. The protein resides in the nucleus speckle. The protein localises to the cell projection. It localises to the ruffle. Its subcellular location is the lamellipodium. The catalysed reaction is a 1,2-diacyl-sn-glycero-3-phospho-(1D-myo-inositol 4-phosphate) + ATP = a 1,2-diacyl-sn-glycero-3-phospho-(1D-myo-inositol-4,5-bisphosphate) + ADP + H(+). It catalyses the reaction 1-octadecanoyl-2-(5Z,8Z,11Z,14Z)-eicosatetraenoyl-sn-glycero-3-phospho-1D-myo-inositol 4-phosphate + ATP = 1-octadecanoyl-2-(5Z,8Z,11Z,14Z)-eicosatetraenoyl-sn-glycero-3-phospho-1D-myo-inositol 4,5-bisphosphate + ADP + H(+). The enzyme catalyses 1,2-dihexadecanoyl-sn-glycero-3-phospho-(1D-myo-inositol-4-phosphate) + ATP = 1,2-dihexadecanoyl-sn-glycero-3-phospho-(1D-myo-inositol-4,5-bisphosphate) + ADP + H(+). It carries out the reaction 1-octadecanoyl-2-(9Z)-octadecenoyl-sn-glycero-3-phospho-1D-myo-inositol 4-phosphate + ATP = 1-octadecanoyl-2-(9Z)-octadecenoyl-sn-glycero-3-phospho-1D-myo-inositol 4,5-bisphosphate + ADP + H(+). The catalysed reaction is 1-octadecanoyl-2-(9Z)-octadecenoyl-sn-glycero-3-phospho-1D-myo-inositol + ATP = 1-octadecanoyl-2-(9Z)-octadecenoyl-sn-glycero-3-phospho-1D-myo-inositol 5-phosphate + ADP + H(+). It catalyses the reaction 1-octadecanoyl-2-(9Z,12Z)-octadecadienoyl-sn-glycero-3-phospho-1D-myo-inositol + ATP = 1-octadecanoyl-2-(9Z,12Z)-octadecadienoyl-sn-glycero-3-phospho-1D-myo-inositol 5-phosphate + ADP + H(+). The enzyme catalyses 1-octadecanoyl-2-(5Z,8Z,11Z,14Z-eicosatetraenoyl)-sn-glycero-3-phospho-(1D-myo-inositol) + ATP = 1-octadecanoyl-2-(5Z,8Z,11Z,14Z)-eicosatetraenoyl-sn-glycero-3-phospho-1D-myo-inositol 5-phosphate + ADP + H(+). It carries out the reaction 1,2-di-(9Z,12Z)-octadecadienoyl-sn-glycero-3-phospho-1D-myo-inositol + ATP = 1,2-di(9Z,12Z)-octadecadienoyl-sn-glycero-3-phospho-1D-myo-inositol 5-phosphate + ADP + H(+). With respect to regulation, activated by phosphatidic acid. Functionally, catalyzes the phosphorylation of phosphatidylinositol 4-phosphate (PtdIns(4)P/PI4P) to form phosphatidylinositol 4,5-bisphosphate (PtdIns(4,5)P2/PIP2), a lipid second messenger that regulates several cellular processes such as signal transduction, vesicle trafficking, actin cytoskeleton dynamics, cell adhesion, and cell motility. PtdIns(4,5)P2 can directly act as a second messenger or can be utilized as a precursor to generate other second messengers: inositol 1,4,5-trisphosphate (IP3), diacylglycerol (DAG) or phosphatidylinositol-3,4,5-trisphosphate (PtdIns(3,4,5)P3/PIP3). PIP5K1A-mediated phosphorylation of PtdIns(4)P is the predominant pathway for PtdIns(4,5)P2 synthesis. Can also use phosphatidylinositol (PtdIns) as substrate in vitro. Together with PIP5K1C, is required for phagocytosis, both enzymes regulating different types of actin remodeling at sequential steps. Promotes particle ingestion by activating the WAS GTPase-binding protein that induces Arp2/3 dependent actin polymerization at the nascent phagocytic cup. Together with PIP5K1B, is required, after stimulation by G-protein coupled receptors, for the synthesis of IP3 that will induce stable platelet adhesion. Recruited to the plasma membrane by the E-cadherin/beta-catenin complex where it provides the substrate PtdIns(4,5)P2 for the production of PtdIns(3,4,5)P3, IP3 and DAG, that will mobilize internal calcium and drive keratinocyte differentiation. Positively regulates insulin-induced translocation of SLC2A4 to the cell membrane in adipocytes. Together with PIP5K1C has a role during embryogenesis. Independently of its catalytic activity, is required for membrane ruffling formation, actin organization and focal adhesion formation during directional cell migration by controlling integrin-induced translocation of the small GTPase RAC1 to the plasma membrane. Also functions in the nucleus where it acts as an activator of TUT1 adenylyltransferase activity in nuclear speckles, thereby regulating mRNA polyadenylation of a select set of mRNAs. This Mus musculus (Mouse) protein is Phosphatidylinositol 4-phosphate 5-kinase type-1 alpha.